The chain runs to 345 residues: NADH-ubiquinone oxidoreductase chain 2 (345 aa).

The next 9 membrane-spanning stretches (helical) occupy residues 1–21 (MNPI…ILAM), 25–45 (HWVY…PIIS), 60–80 (FLIQ…NAYL), 113–133 (FWLP…IATW), 148–168 (LIPT…GGLG), 191–211 (VIII…YMIF), 239–259 (IITS…PMSG), 274–294 (HLTP…MFYL), and 324–344 (SSLS…PLLI).

Belongs to the complex I subunit 2 family.

The protein localises to the mitochondrion inner membrane. The enzyme catalyses a ubiquinone + NADH + 5 H(+)(in) = a ubiquinol + NAD(+) + 4 H(+)(out). Its function is as follows. Core subunit of the mitochondrial membrane respiratory chain NADH dehydrogenase (Complex I) that is believed to belong to the minimal assembly required for catalysis. Complex I functions in the transfer of electrons from NADH to the respiratory chain. The immediate electron acceptor for the enzyme is believed to be ubiquinone. This is NADH-ubiquinone oxidoreductase chain 2 (MT-ND2) from Varanus baritji (Black-spotted ridge-tailed monitor).